A 146-amino-acid chain; its full sequence is MAFWQSKTLTEMTSQEWESLCDGCGKCCLNKLIDDETEELYYTNAACLLLDHQTTSCQHYSDRFRYVPQCTVITAQNVHELTWLPDSCAYRRLAAGRALPSWHPLLTGSKDAMHLAGMSIQGKVVDERRVKDIEDHIVLWPLKDLD.

Belongs to the UPF0260 family.

This is UPF0260 protein SO_2573 from Shewanella oneidensis (strain ATCC 700550 / JCM 31522 / CIP 106686 / LMG 19005 / NCIMB 14063 / MR-1).